The chain runs to 449 residues: Probable phosphoglucosamine mutase (449 aa).

Ser96 functions as the Phosphoserine intermediate in the catalytic mechanism. The Mg(2+) site is built by Ser96, Asp233, Asp235, and Asp237. Ser96 carries the post-translational modification Phosphoserine.

It belongs to the phosphohexose mutase family. The cofactor is Mg(2+). Activated by phosphorylation.

The enzyme catalyses alpha-D-glucosamine 1-phosphate = D-glucosamine 6-phosphate. In terms of biological role, catalyzes the conversion of glucosamine-6-phosphate to glucosamine-1-phosphate. The sequence is that of Probable phosphoglucosamine mutase from Thermococcus gammatolerans (strain DSM 15229 / JCM 11827 / EJ3).